A 333-amino-acid chain; its full sequence is Potassium channel protein 1 (333 aa).

Topologically, residues methionine 1–lysine 6 are cytoplasmic. A helical membrane pass occupies residues isoleucine 7–threonine 27. The Extracellular segment spans residues valine 28–lysine 60. The Selectivity filter signature appears at threonine 46–aspartate 51. Residues leucine 61–isoleucine 81 form a helical membrane-spanning segment. Residues alanine 82–glutamate 333 are Cytoplasmic-facing. The RCK N-terminal domain occupies asparagine 107–isoleucine 229. Positions glutamate 246–glycine 331 constitute an RCK C-terminal domain.

As to quaternary structure, homotetramer.

Its subcellular location is the cell membrane. Its function is as follows. Potassium channel protein. Seems to conduct potassium at low membrane potentials. The protein is Potassium channel protein 1 of Methanocaldococcus jannaschii (strain ATCC 43067 / DSM 2661 / JAL-1 / JCM 10045 / NBRC 100440) (Methanococcus jannaschii).